Reading from the N-terminus, the 230-residue chain is Cytochrome c oxidase subunit 2 (230 aa).

At 1 to 14 (MAHPAQLGFQDAAS) the chain is on the mitochondrial intermembrane side. Residues 15–45 (PVMEELLCFHDHALMIVFLISTLVLYIIIAM) form a helical membrane-spanning segment. Over 46–59 (VSTKLTNKFILDSQ) the chain is Mitochondrial matrix. The chain crosses the membrane as a helical span at residues 60–87 (EIEIVWTVLPAIILILIALPSLRILYLM). Over 88–230 (DEINDPHVTI…NWSSAMLEDA (143 aa)) the chain is Mitochondrial intermembrane. 6 residues coordinate Cu cation: histidine 161, cysteine 196, glutamate 198, cysteine 200, histidine 204, and methionine 207. A Mg(2+)-binding site is contributed by glutamate 198.

Belongs to the cytochrome c oxidase subunit 2 family. As to quaternary structure, component of the cytochrome c oxidase (complex IV, CIV), a multisubunit enzyme composed of 14 subunits. The complex is composed of a catalytic core of 3 subunits MT-CO1, MT-CO2 and MT-CO3, encoded in the mitochondrial DNA, and 11 supernumerary subunits COX4I, COX5A, COX5B, COX6A, COX6B, COX6C, COX7A, COX7B, COX7C, COX8 and NDUFA4, which are encoded in the nuclear genome. The complex exists as a monomer or a dimer and forms supercomplexes (SCs) in the inner mitochondrial membrane with NADH-ubiquinone oxidoreductase (complex I, CI) and ubiquinol-cytochrome c oxidoreductase (cytochrome b-c1 complex, complex III, CIII), resulting in different assemblies (supercomplex SCI(1)III(2)IV(1) and megacomplex MCI(2)III(2)IV(2)). Found in a complex with TMEM177, COA6, COX18, COX20, SCO1 and SCO2. Interacts with TMEM177 in a COX20-dependent manner. Interacts with COX20. Interacts with COX16. Cu cation is required as a cofactor.

The protein resides in the mitochondrion inner membrane. It carries out the reaction 4 Fe(II)-[cytochrome c] + O2 + 8 H(+)(in) = 4 Fe(III)-[cytochrome c] + 2 H2O + 4 H(+)(out). Its function is as follows. Component of the cytochrome c oxidase, the last enzyme in the mitochondrial electron transport chain which drives oxidative phosphorylation. The respiratory chain contains 3 multisubunit complexes succinate dehydrogenase (complex II, CII), ubiquinol-cytochrome c oxidoreductase (cytochrome b-c1 complex, complex III, CIII) and cytochrome c oxidase (complex IV, CIV), that cooperate to transfer electrons derived from NADH and succinate to molecular oxygen, creating an electrochemical gradient over the inner membrane that drives transmembrane transport and the ATP synthase. Cytochrome c oxidase is the component of the respiratory chain that catalyzes the reduction of oxygen to water. Electrons originating from reduced cytochrome c in the intermembrane space (IMS) are transferred via the dinuclear copper A center (CU(A)) of subunit 2 and heme A of subunit 1 to the active site in subunit 1, a binuclear center (BNC) formed by heme A3 and copper B (CU(B)). The BNC reduces molecular oxygen to 2 water molecules using 4 electrons from cytochrome c in the IMS and 4 protons from the mitochondrial matrix. This chain is Cytochrome c oxidase subunit 2 (mt-co2), found in Danio rerio (Zebrafish).